The chain runs to 142 residues: Large ribosomal subunit protein uL11 (142 aa).

This sequence belongs to the universal ribosomal protein uL11 family. In terms of assembly, part of the ribosomal stalk of the 50S ribosomal subunit. Interacts with L10 and the large rRNA to form the base of the stalk. L10 forms an elongated spine to which L12 dimers bind in a sequential fashion forming a multimeric L10(L12)X complex. In terms of processing, one or more lysine residues are methylated.

Forms part of the ribosomal stalk which helps the ribosome interact with GTP-bound translation factors. The sequence is that of Large ribosomal subunit protein uL11 from Bradyrhizobium sp. (strain ORS 278).